The sequence spans 925 residues: MEYNFQEIEKRVQGQWRKDKVYRVAEDTSKKPFYVLDMFPYPSGAGLHVGHPLGYIASDIFSRYKRLRGFNVLHPMGYDAFGLPAEQYAIQTGQHPEKTTEENTARYREQLDKIGFSYDWEREIRTCDPNYYKWTQWAFLKMFDSYYCNQAQQARPISELIEVFARQGNEGLNVACGEGVRFTAEEWTAMSEKEQQEILMNYRLAYLGDTMVNWCPALGTVLANDEVKDGVSERGGHPVEQKKMRQWCLRVSAYAERLLHDLETLDWTESLKETQRNWIGRSEGAEMEFRLAGKDCTFTIFTTRADTIFGVTFMVLAPESELVEEVTTEEQRAAVETYLTETKRRTERERISDKRVSGVFSGSYAINPLTGKEIPIWISDYVLAGYGTGAIMAVPAHDTRDFAFARHFDLPIVQVVVPEGETATDPATWEDAKDSKSGIMVNSDFLNGLSVEDAIAQTKEYIREKHLGCVKVNYRLRDAIFSRQRYWGEPFPIYYKEGMPHALDEDRLPLRLPEVDKFLPTESGEPPLGRATGWHTAEGYPYELSTMPGFAGSSAYYLRYMDPQNDTALVSRSANEYWRHVDLYIGGTEHATGHLIYSRFWNKFLFDLGIVCEAEPFRKLVNQGMIQGRSNFVYRIKNTNTFVSYGLREQYEVTPLHVDVNIVSNDQLDIDRFRAWRPEYASAEFILEDGKYICGWAIEKMSKSMFNVVNPDDIIARYGADTLRLYEMFLGPLEQSKPWDTNGIDGVHRFLKKFWALYYNADGIRVTDTAPTKEELKSLHKLIKKVGQDIESFSFNTSIPAFMICVNELTAAKTTSRAILCPLLTVLSPFAPHITEWLWQELGVEGSIVTATWPEYNEEYLVESCVRYPVSFNGKVRFNIELPADMSKKDVEQAALTAPEAARWLEGKSPKKVIVVPGRIVNVVV.

The 'HIGH' region motif lies at 40-51; that stretch reads PYPSGAGLHVGH. The 'KMSKS' region motif lies at 700–704; sequence KMSKS. Lysine 703 contacts ATP.

It belongs to the class-I aminoacyl-tRNA synthetase family.

The protein localises to the cytoplasm. It carries out the reaction tRNA(Leu) + L-leucine + ATP = L-leucyl-tRNA(Leu) + AMP + diphosphate. The protein is Leucine--tRNA ligase of Porphyromonas gingivalis (strain ATCC 33277 / DSM 20709 / CIP 103683 / JCM 12257 / NCTC 11834 / 2561).